The chain runs to 967 residues: MDTSMTGNEIRKTFIDFFIKKGHKYVHSSSTIPLDDPTLLFANAGMNQFKPIFLGSVDPNSDMAQYIRVVNTQKCIRAGGKHNDLDDVGKDVYHHTFFEMMGNWSFGDYFKKEICAWAWELLTDVFKLSRERLYVTYFEGDPSSGLEPDLECRNIWLNLGVPEAHILPGSMKDNFWEMGETGPCGPCSELHYDRIGDREAAHLVNMDDPDVLEIWNLVFIQFNRETDGSLKLLPTKHIDCGLGLERLVSVIQNKRANYDTDFFMPIFKAIENATGVRPYSGKVGVDDVDGIDMAYRVLADHARTLTIALSDGGCPDNTGRGYVLRRILRRAVRYASEKLNAKPGFFGSLVYTVVELLGDVFPEIKKDPDSIVHVINEEEVQFLKTLLRGRNLLYRTIEKLNNSKTLPGDVAWRLYDTYGFPIDLTQLMCEEKGLNVDMEGYEKSRKESQLVSQGKAAGQEDLIALDVHAISHLQDTGIPATDDSPKYNYLPSSTDKDALYTFAPCTAKIVALRKNKEFVSEISSGQECGVILDRTSFYAEQGGQIFDEGYMVKIDDETVEFTVKNVQVKGGYVLHAGKVEGILKVGDTLSLHIDTERRRLVMNNHTGTHVLNNVLRKVLGNDSDQRGSLVMPDRLRFDFTNKGPMTIKQIKDTENEIKEIIAKNKTVYANYTSLSEAKKINGLRAMFDEHYPDPVRVVSVGVPVEDLIKNPDAPTGFETSVEFCGGSHLHRTSHIGEYVIVSEEGIAKGIRRIVAVTGPEAIKAINKLSVLENEVNNVANFIKEQNESISHKEVSKKIVDLTNEISQAQISYWKKDELRNMLKNLKKQLDDKERAEKAIIITQVTEKAKELCLERKESKYIVSELKAFGNTKALDGALKQVKQFCPNSAAMFFSVDKDADKIYCLAAVPKSDVEKGLLASEWVQSVVDIIGGKGGGKAESAQASGNNPNSLNEAIQIANEYAKSKLN.

Zn(2+)-binding residues include histidine 605, histidine 609, cysteine 724, and histidine 728.

Belongs to the class-II aminoacyl-tRNA synthetase family. Monomer. Zn(2+) is required as a cofactor. The N-terminus is blocked.

It localises to the cytoplasm. The enzyme catalyses tRNA(Ala) + L-alanine + ATP = L-alanyl-tRNA(Ala) + AMP + diphosphate. Its function is as follows. Catalyzes the attachment of alanine to tRNA(Ala) in a two-step reaction: alanine is first activated by ATP to form Ala-AMP and then transferred to the acceptor end of tRNA(Ala). Also edits incorrectly charged tRNA(Ala) via its editing domain. In Bombyx mori (Silk moth), this protein is Alanine--tRNA ligase, cytoplasmic.